The following is a 178-amino-acid chain: tRNA (cytidine(56)-2'-O)-methyltransferase (178 aa).

S-adenosyl-L-methionine is bound at residue L88.

This sequence belongs to the aTrm56 family. As to quaternary structure, homodimer.

It localises to the cytoplasm. It carries out the reaction cytidine(56) in tRNA + S-adenosyl-L-methionine = 2'-O-methylcytidine(56) in tRNA + S-adenosyl-L-homocysteine + H(+). Its function is as follows. Specifically catalyzes the AdoMet-dependent 2'-O-ribose methylation of cytidine at position 56 in tRNAs. The protein is tRNA (cytidine(56)-2'-O)-methyltransferase of Methanopyrus kandleri (strain AV19 / DSM 6324 / JCM 9639 / NBRC 100938).